The sequence spans 874 residues: Alanine--tRNA ligase (874 aa).

Residues H564, H568, C665, and H669 each coordinate Zn(2+).

The protein belongs to the class-II aminoacyl-tRNA synthetase family. Requires Zn(2+) as cofactor.

It is found in the cytoplasm. The catalysed reaction is tRNA(Ala) + L-alanine + ATP = L-alanyl-tRNA(Ala) + AMP + diphosphate. Functionally, catalyzes the attachment of alanine to tRNA(Ala) in a two-step reaction: alanine is first activated by ATP to form Ala-AMP and then transferred to the acceptor end of tRNA(Ala). Also edits incorrectly charged Ser-tRNA(Ala) and Gly-tRNA(Ala) via its editing domain. This chain is Alanine--tRNA ligase, found in Burkholderia lata (strain ATCC 17760 / DSM 23089 / LMG 22485 / NCIMB 9086 / R18194 / 383).